A 441-amino-acid polypeptide reads, in one-letter code: Xaa-Pro dipeptidase (441 aa).

Mn(2+) is bound by residues aspartate 244, aspartate 255, histidine 336, glutamate 381, and glutamate 420.

The protein belongs to the peptidase M24B family. Bacterial-type prolidase subfamily. Mn(2+) serves as cofactor.

The catalysed reaction is Xaa-L-Pro dipeptide + H2O = an L-alpha-amino acid + L-proline. Functionally, splits dipeptides with a prolyl residue in the C-terminal position. The sequence is that of Xaa-Pro dipeptidase from Xanthomonas campestris pv. campestris (strain 8004).